The chain runs to 488 residues: Glutamyl-tRNA(Gln) amidotransferase subunit A (488 aa).

Active-site charge relay system residues include K77 and S152. S176 functions as the Acyl-ester intermediate in the catalytic mechanism.

The protein belongs to the amidase family. GatA subfamily. Heterotrimer of A, B and C subunits.

It catalyses the reaction L-glutamyl-tRNA(Gln) + L-glutamine + ATP + H2O = L-glutaminyl-tRNA(Gln) + L-glutamate + ADP + phosphate + H(+). Allows the formation of correctly charged Gln-tRNA(Gln) through the transamidation of misacylated Glu-tRNA(Gln) in organisms which lack glutaminyl-tRNA synthetase. The reaction takes place in the presence of glutamine and ATP through an activated gamma-phospho-Glu-tRNA(Gln). The polypeptide is Glutamyl-tRNA(Gln) amidotransferase subunit A (Streptococcus pneumoniae (strain 70585)).